A 264-amino-acid chain; its full sequence is uncharacterized protein (264 aa).

4 helical membrane passes run 43–63 (VVAA…LYLI), 68–88 (FLPS…LLGI), 96–116 (ILPA…LGCI), and 150–170 (LAAK…VLAV). The disordered stretch occupies residues 216–247 (SYEDALKNSSQQPSTSSSSSSPPSRPPHSVYT). The segment covering 224–237 (SSQQPSTSSSSSSP) has biased composition (low complexity).

It localises to the membrane. This is an uncharacterized protein from Caenorhabditis elegans.